Here is a 215-residue protein sequence, read N- to C-terminus: CASP-like protein 1U3 (215 aa).

At 1–13 (MHDEEKKEPKWVT) the chain is on the cytoplasmic side. The chain crosses the membrane as a helical span at residues 14 to 34 (AVSIAGRIAGMGLAVAAAVLM). Residues 35-68 (STASQCTVYYAAPAASAYGGAARARTVTYSDFPP) are Extracellular-facing. A helical transmembrane segment spans residues 69–89 (FVFLVGAASIAAFLEAIAIFL). At 90 to 105 (VVWKKGKDKTTKVLMP) the chain is on the cytoplasmic side. The chain crosses the membrane as a helical span at residues 106-126 (LLGVAVPALLYSATGAAFAAV). The Extracellular segment spans residues 127–161 (SDMSYCSANGKRVSICAGSAAAGGGVSGGTNFCSQ). A helical membrane pass occupies residues 162-182 (VHIAVYLSLAAAVAVSVAEVV). The Cytoplasmic segment spans residues 183 to 215 (RGLGGSASGGGSDSDSSSSSESGGCDHGCHHKH). The disordered stretch occupies residues 187–215 (GSASGGGSDSDSSSSSESGGCDHGCHHKH). A compositionally biased stretch (low complexity) spans 195-205 (DSDSSSSSESG).

The protein belongs to the Casparian strip membrane proteins (CASP) family. Homodimer and heterodimers.

It localises to the cell membrane. The sequence is that of CASP-like protein 1U3 from Sorghum bicolor (Sorghum).